The following is a 343-amino-acid chain: Cilia- and flagella-associated protein 36 (343 aa).

Residues Ser-85 and Ser-147 each carry the phosphoserine modification. A coiled-coil region spans residues 147 to 187; sequence SDLEQEEMKILREVLRKSKEEYDQEEERKRKKQSSEAKMEE. The tract at residues 165–188 is disordered; it reads KEEYDQEEERKRKKQSSEAKMEEL. Position 201 is a phosphoserine (Ser-201). 2 stretches are compositionally biased toward basic and acidic residues: residues 279-293 and 301-323; these read QKRD…DTRT and QKGK…AEEK. The interval 279–323 is disordered; that stretch reads QKRDKLLSMRKDTRTKQIQNTEQKGKPTREAEEMTEKPEMTAEEK.

The protein belongs to the CFAP36 family. In terms of assembly, interacts with ARL3.

The protein localises to the nucleus. The protein resides in the cytoplasm. Its subcellular location is the cell projection. It is found in the cilium. It localises to the flagellum. May act as an effector for ARL3. The polypeptide is Cilia- and flagella-associated protein 36 (Mus musculus (Mouse)).